We begin with the raw amino-acid sequence, 141 residues long: Putative inactive deoxyuridine 5'-triphosphate nucleotidohydrolase-like protein FLJ16323 (141 aa).

It belongs to the dUTPase family.

This chain is Putative inactive deoxyuridine 5'-triphosphate nucleotidohydrolase-like protein FLJ16323, found in Homo sapiens (Human).